A 422-amino-acid chain; its full sequence is Protein krasavietz (422 aa).

Residues 1–26 form a disordered region; it reads MSQKTERPVLSGQRIKTRKRDEREKY. One can recognise a W2 domain in the interval 244–415; that stretch reads KLHKAQASQE…QSAEEESESE (172 aa). A phosphoserine mark is found at S407, S412, and S414.

This sequence belongs to the BZW family. As to expression, expressed in mushroom bodies.

Its function is as follows. May be involved in memory formation. In Drosophila melanogaster (Fruit fly), this protein is Protein krasavietz (kra).